The chain runs to 741 residues: Aspartyl/asparaginyl beta-hydroxylase (741 aa).

The segment at 1–54 (MAPRKNAKGGGGNSSSSGSGSGSGSGSPSTGSSGSSSSPGARREAKHGGHKNGR) is disordered. The Cytoplasmic segment spans residues 1–62 (MAPRKNAKGG…GRRGGISGGS (62 aa)). Over residues 8–25 (KGGGGNSSSSGSGSGSGS) the composition is skewed to gly residues. S15 bears the Phosphoserine mark. The span at 26-40 (GSPSTGSSGSSSSPG) shows a compositional bias: low complexity. A helical; Signal-anchor for type II membrane protein transmembrane segment spans residues 63-83 (FFTWFMVIALLGVWTSVAVVW). The Lumenal portion of the chain corresponds to 84–741 (FDLVDYEEVL…PQQRRSLPAI (658 aa)). Ca(2+)-binding residues include D100, D102, D104, D106, and D111. 2 disordered regions span residues 120–141 (ERSP…AELE) and 222–244 (TASQ…SDPS). Residues 231–242 (MEEMTNEQENSD) are compositionally biased toward acidic residues. TPR repeat units lie at residues 324-357 (IKAE…YPQS), 365-398 (AQCE…PDAP), 437-470 (TTLK…TPND), 472-504 (FAKV…GDPG), and 508-540 (GRFY…GHFA). A glycan (N-linked (GlcNAc...) asparagine) is linked at N453. Position 608 (W608) interacts with 2-oxoglutarate. C624 and C631 are oxidised to a cystine. S651 contacts 2-oxoglutarate. H662 lines the Fe cation pocket. A 2-oxoglutarate-binding site is contributed by 671 to 673 (RMH). N-linked (GlcNAc...) asparagine glycosylation occurs at N689. H708 contributes to the Fe cation binding site. 2-oxoglutarate is bound at residue R718.

The protein belongs to the aspartyl/asparaginyl beta-hydroxylase family. As to quaternary structure, monomer. Isoform 2 interacts with CASQ2. Fe cation is required as a cofactor. Isoform 1 is detected in heart, liver and ovary (at protein level). Detected in heart ventricle. Isoform 1 is widely expressed. Isoform 2 is detected in heart and skeletal muscle.

Its subcellular location is the endoplasmic reticulum membrane. It localises to the sarcoplasmic reticulum membrane. It catalyses the reaction L-aspartyl-[protein] + 2-oxoglutarate + O2 = 3-hydroxy-L-aspartyl-[protein] + succinate + CO2. Its function is as follows. Specifically hydroxylates an Asp or Asn residue in certain epidermal growth factor-like (EGF) domains of a number of proteins. In Mus musculus (Mouse), this protein is Aspartyl/asparaginyl beta-hydroxylase (Asph).